Reading from the N-terminus, the 46-residue chain is Large ribosomal subunit protein bL36 (46 aa).

Belongs to the bacterial ribosomal protein bL36 family.

The protein is Large ribosomal subunit protein bL36 of Photorhabdus laumondii subsp. laumondii (strain DSM 15139 / CIP 105565 / TT01) (Photorhabdus luminescens subsp. laumondii).